A 138-amino-acid polypeptide reads, in one-letter code: Spermidine export protein MdtJ (138 aa).

4 helical membrane-spanning segments follow: residues 1-21, 30-50, 54-74, and 81-101; these read MIYWLFLAMAIITEVIGTLSM, VVGMAVMYIMIATSYILLAMA, VALGVAYALWEGVGILFITVF, and ESLSLMKVGGLALLITGIMLI.

Belongs to the drug/metabolite transporter (DMT) superfamily. Small multidrug resistance (SMR) (TC 2.A.7.1) family. MdtJ subfamily. In terms of assembly, forms a complex with MdtI.

It is found in the cell inner membrane. Its function is as follows. Catalyzes the excretion of spermidine. This chain is Spermidine export protein MdtJ, found in Photorhabdus laumondii subsp. laumondii (strain DSM 15139 / CIP 105565 / TT01) (Photorhabdus luminescens subsp. laumondii).